Here is a 20-residue protein sequence, read N- to C-terminus: Hemocyanin subunit Ia (20 aa).

Residues 1–20 (ADXQPGDSTDKLLAQKQDDV) form a disordered region.

This sequence belongs to the tyrosinase family. Hemocyanin subfamily. In terms of assembly, composed of 3 major subunits (IB, II and III) and 1 minor subunit (IA) which form homohexamers and heterohexamers. May also form larger structures. Hemolymph.

It localises to the secreted. The protein resides in the extracellular space. Hemocyanins are copper-containing oxygen carriers occurring freely dissolved in the hemolymph of many mollusks and arthropods. This is Hemocyanin subunit Ia from Panulirus japonicus (Japanese spiny lobster).